The sequence spans 521 residues: Formate--tetrahydrofolate ligase (521 aa).

Belongs to the formate--tetrahydrofolate ligase family.

The catalysed reaction is (6S)-5,6,7,8-tetrahydrofolate + formate + ATP = (6R)-10-formyltetrahydrofolate + ADP + phosphate. It participates in one-carbon metabolism; tetrahydrofolate interconversion. The sequence is that of Formate--tetrahydrofolate ligase from Ureaplasma parvum serovar 3 (strain ATCC 700970).